The following is a 222-amino-acid chain: MLSRAVCGTGRQLAPALGYLGSRQKHSLPDLPYDYGALEPHINAQIMQLHHSKHHAAYVNNLNVTEEKYQEALAKGDVTAQIALQPALKFNGGGHINHSIFWTNLSPNGGGEPKGELLEAIKRDFGSFEKFKEKLTAASVGVQGSGWGWLGFNKERGQLQIAACPNQDPLQGTTGLIPLLGIDVWEHAYYLQYKNVRPDYLKAIWNVINWENVTERYMACKK.

The N-terminal 24 residues, 1–24 (MLSRAVCGTGRQLAPALGYLGSRQ), are a transit peptide targeting the mitochondrion. H50 contacts Mn(2+). Y58 is subject to 3'-nitrotyrosine. K68 and K75 each carry N6-acetyllysine; alternate. N6-succinyllysine; alternate occurs at positions 68 and 75. H98 contacts Mn(2+). N6-acetyllysine is present on K114. K122 and K130 each carry N6-acetyllysine; alternate. N6-succinyllysine; alternate is present on residues K122 and K130. Positions 183 and 187 each coordinate Mn(2+). K202 carries the post-translational modification N6-acetyllysine.

The protein belongs to the iron/manganese superoxide dismutase family. Homotetramer. Mn(2+) serves as cofactor. Post-translationally, nitrated under oxidative stress. Nitration coupled with oxidation inhibits the catalytic activity. Acetylation at Lys-122 decreases enzymatic activity. Deacetylated by SIRT3 upon exposure to ionizing radiations or after long fasting. In terms of processing, polyubiquitinated; leading to proteasomal degradation. Deubiquitinated by USP36 which increases protein stability.

The protein resides in the mitochondrion matrix. It carries out the reaction 2 superoxide + 2 H(+) = H2O2 + O2. In terms of biological role, destroys superoxide anion radicals which are normally produced within the cells and which are toxic to biological systems. This Macaca fascicularis (Crab-eating macaque) protein is Superoxide dismutase [Mn], mitochondrial (SOD2).